The following is a 654-amino-acid chain: Translation factor GUF1, mitochondrial (654 aa).

Residues 57 to 237 (ENYRNFSIVA…SVIKNIPSPV (181 aa)) form the tr-type G domain. GTP contacts are provided by residues 66 to 73 (AHVDHGKS), 130 to 134 (DTPGH), and 184 to 187 (NKID).

This sequence belongs to the TRAFAC class translation factor GTPase superfamily. Classic translation factor GTPase family. LepA subfamily.

The protein localises to the mitochondrion inner membrane. It catalyses the reaction GTP + H2O = GDP + phosphate + H(+). Its function is as follows. Promotes mitochondrial protein synthesis. May act as a fidelity factor of the translation reaction, by catalyzing a one-codon backward translocation of tRNAs on improperly translocated ribosomes. Binds to mitochondrial ribosomes in a GTP-dependent manner. The sequence is that of Translation factor GUF1, mitochondrial from Candida albicans (strain WO-1) (Yeast).